We begin with the raw amino-acid sequence, 264 residues long: Glutamate racemase (264 aa).

Substrate contacts are provided by residues 11–12 and 43–44; these read DS and YG. The active-site Proton donor/acceptor is cysteine 74. 75-76 serves as a coordination point for substrate; it reads NT. Cysteine 193 serves as the catalytic Proton donor/acceptor. 194–195 provides a ligand contact to substrate; sequence TH.

Belongs to the aspartate/glutamate racemases family.

It carries out the reaction L-glutamate = D-glutamate. Its pathway is cell wall biogenesis; peptidoglycan biosynthesis. Its function is as follows. Provides the (R)-glutamate required for cell wall biosynthesis. The protein is Glutamate racemase of Bifidobacterium longum (strain DJO10A).